The sequence spans 59 residues: Small ribosomal subunit protein bS21 (59 aa).

Residues 36–59 (EHYEKPSVKRKKKAEAAKRNKSKF) are disordered. Basic residues predominate over residues 43-59 (VKRKKKAEAAKRNKSKF).

It belongs to the bacterial ribosomal protein bS21 family.

This chain is Small ribosomal subunit protein bS21, found in Alkaliphilus oremlandii (strain OhILAs) (Clostridium oremlandii (strain OhILAs)).